A 315-amino-acid polypeptide reads, in one-letter code: Olfactory receptor 5A1 (315 aa).

Over 1-28 (MSITKAWNSSSVTMFILLGFTDHPELQA) the chain is Extracellular. N-linked (GlcNAc...) asparagine glycosylation occurs at N8. The chain crosses the membrane as a helical span at residues 29-52 (LLFVTFLGIYLTTLAWNLALIFLI). Over 53–60 (RGDTHLHT) the chain is Cytoplasmic. The helical transmembrane segment at 61–82 (PMYFFLSNLSFIDICYSSAVAP) threads the bilayer. Topologically, residues 83 to 103 (NMLTDFFWEQKTISFVGCAAQ) are extracellular. A disulfide bridge connects residues C100 and C192. Residues 104–123 (FFFFVGMGLSECLLLTAMAY) form a helical membrane-spanning segment. At 124-142 (DRYAAISSPLLYPTIMTQG) the chain is on the cytoplasmic side. The chain crosses the membrane as a helical span at residues 143–161 (LCTRMVVGAYVGGFLSSLI). Residues 162–198 (QASSIFRLHFCGPNIINHFFCDLPPVLALSCSDTFLS) are Extracellular-facing. The helical transmembrane segment at 199-222 (QVVNFLVVVTVGGTSFLQLLISYG) threads the bilayer. Residues 223-239 (YIVSAVLKIPSAEGRWK) lie on the Cytoplasmic side of the membrane. Residues 240-262 (ACNTCASHLMVVTLLFGTALFVY) form a helical membrane-spanning segment. Residues 263 to 275 (LRPSSSYLLGRDK) are Extracellular-facing. The chain crosses the membrane as a helical span at residues 276 to 295 (VVSVFYSLVIPMLNPLIYSL). The Cytoplasmic segment spans residues 296 to 315 (RNKEIKDALWKVLERKKVFS).

It belongs to the G-protein coupled receptor 1 family.

It is found in the cell membrane. Odorant receptor. This Homo sapiens (Human) protein is Olfactory receptor 5A1 (OR5A1).